The chain runs to 201 residues: Large ribosomal subunit protein eL15B (201 aa).

A disordered region spans residues 161-182 (SRGLTSIGKKSRGIGKGHRYNN). Residues 169–179 (KKSRGIGKGHR) show a composition bias toward basic residues. Ser183 is subject to Phosphoserine.

This sequence belongs to the eukaryotic ribosomal protein eL15 family. In terms of assembly, component of the large ribosomal subunit (LSU). Mature yeast ribosomes consist of a small (40S) and a large (60S) subunit. The 40S small subunit contains 1 molecule of ribosomal RNA (18S rRNA) and at least 33 different proteins. The large 60S subunit contains 3 rRNA molecules (25S, 5.8S and 5S rRNA) and at least 46 different proteins.

Its subcellular location is the cytoplasm. It localises to the nucleus. It is found in the nucleolus. In terms of biological role, component of the ribosome, a large ribonucleoprotein complex responsible for the synthesis of proteins in the cell. The small ribosomal subunit (SSU) binds messenger RNAs (mRNAs) and translates the encoded message by selecting cognate aminoacyl-transfer RNA (tRNA) molecules. The large subunit (LSU) contains the ribosomal catalytic site termed the peptidyl transferase center (PTC), which catalyzes the formation of peptide bonds, thereby polymerizing the amino acids delivered by tRNAs into a polypeptide chain. The nascent polypeptides leave the ribosome through a tunnel in the LSU and interact with protein factors that function in enzymatic processing, targeting, and the membrane insertion of nascent chains at the exit of the ribosomal tunnel. The sequence is that of Large ribosomal subunit protein eL15B (rpl1502) from Schizosaccharomyces pombe (strain 972 / ATCC 24843) (Fission yeast).